The chain runs to 403 residues: Methylthioribose-1-phosphate isomerase (403 aa).

Asp280 serves as the catalytic Proton donor.

Belongs to the eIF-2B alpha/beta/delta subunits family. MtnA subfamily.

It localises to the cytoplasm. It is found in the nucleus. The enzyme catalyses 5-(methylsulfanyl)-alpha-D-ribose 1-phosphate = 5-(methylsulfanyl)-D-ribulose 1-phosphate. The protein operates within amino-acid biosynthesis; L-methionine biosynthesis via salvage pathway; L-methionine from S-methyl-5-thio-alpha-D-ribose 1-phosphate: step 1/6. Functionally, catalyzes the interconversion of methylthioribose-1-phosphate (MTR-1-P) into methylthioribulose-1-phosphate (MTRu-1-P). The sequence is that of Methylthioribose-1-phosphate isomerase from Eremothecium gossypii (strain ATCC 10895 / CBS 109.51 / FGSC 9923 / NRRL Y-1056) (Yeast).